The chain runs to 828 residues: Putative alpha-1,3-mannosyltransferase MNN12 (828 aa).

Over 1 to 13 (MIEKLTIKRSRQK) the chain is Cytoplasmic. A helical membrane pass occupies residues 14–34 (VIAYSVIIIWLMIVNIWLLNN). Topologically, residues 35–828 (YHLNSSTLTR…YYGDVWVGME (794 aa)) are lumenal. Asparagine 38 is a glycosylation site (N-linked (GlcNAc...) asparagine). The interval 80 to 104 (HQEEDVPNSQSTDNSLIKPTSPAKN) is disordered. Polar residues predominate over residues 86–103 (PNSQSTDNSLIKPTSPAK). N-linked (GlcNAc...) asparagine glycosylation is found at asparagine 247, asparagine 437, and asparagine 591.

Belongs to the MNN1/MNT family.

The protein resides in the golgi apparatus membrane. It functions in the pathway protein modification; protein glycosylation. Its function is as follows. Responsible for addition of the terminal mannose residues to the outer chain of core N-linked polysaccharides and to O-linked mannotriose. Implicated in late Golgi modifications. This chain is Putative alpha-1,3-mannosyltransferase MNN12 (MNN12), found in Candida albicans (strain SC5314 / ATCC MYA-2876) (Yeast).